The primary structure comprises 404 residues: 4-hydroxyphenylpyruvate dioxygenase (404 aa).

VOC domains are found at residues 28 to 163 (GYDH…FIQR) and 194 to 353 (YVDH…IFTK). Fe cation-binding residues include His-197, His-280, and Glu-364.

Belongs to the 4HPPD family. Requires Fe cation as cofactor.

It carries out the reaction 3-(4-hydroxyphenyl)pyruvate + O2 = homogentisate + CO2. It functions in the pathway amino-acid degradation; L-phenylalanine degradation; acetoacetate and fumarate from L-phenylalanine: step 3/6. Functionally, key enzyme in the degradation of tyrosine. The sequence is that of 4-hydroxyphenylpyruvate dioxygenase (TFA) from Tetrahymena thermophila.